A 237-amino-acid chain; its full sequence is Purine nucleoside phosphorylase DeoD-type (237 aa).

Position 5 (histidine 5) interacts with a purine D-ribonucleoside. Phosphate-binding positions include glycine 21, arginine 25, arginine 44, and 88-91; that span reads RVGS. A purine D-ribonucleoside is bound by residues 180-182 and 204-205; these read EME and SD. Aspartate 205 acts as the Proton donor in catalysis.

It belongs to the PNP/UDP phosphorylase family. As to quaternary structure, homohexamer; trimer of homodimers.

It catalyses the reaction a purine D-ribonucleoside + phosphate = a purine nucleobase + alpha-D-ribose 1-phosphate. The catalysed reaction is a purine 2'-deoxy-D-ribonucleoside + phosphate = a purine nucleobase + 2-deoxy-alpha-D-ribose 1-phosphate. Its function is as follows. Catalyzes the reversible phosphorolytic breakdown of the N-glycosidic bond in the beta-(deoxy)ribonucleoside molecules, with the formation of the corresponding free purine bases and pentose-1-phosphate. The polypeptide is Purine nucleoside phosphorylase DeoD-type (Edwardsiella ictaluri (strain 93-146)).